The primary structure comprises 250 residues: Hydroxyacylglutathione hydrolase (250 aa).

Zn(2+) contacts are provided by His-53, His-55, Asp-57, His-58, His-110, Asp-127, and His-165.

This sequence belongs to the metallo-beta-lactamase superfamily. Glyoxalase II family. Monomer. The cofactor is Zn(2+).

It carries out the reaction an S-(2-hydroxyacyl)glutathione + H2O = a 2-hydroxy carboxylate + glutathione + H(+). The protein operates within secondary metabolite metabolism; methylglyoxal degradation; (R)-lactate from methylglyoxal: step 2/2. Thiolesterase that catalyzes the hydrolysis of S-D-lactoyl-glutathione to form glutathione and D-lactic acid. This Buchnera aphidicola subsp. Schizaphis graminum (strain Sg) protein is Hydroxyacylglutathione hydrolase.